The primary structure comprises 146 residues: D-aminoacyl-tRNA deacylase (146 aa).

The short motif at 137-138 (GP) is the Gly-cisPro motif, important for rejection of L-amino acids element.

The protein belongs to the DTD family. As to quaternary structure, homodimer.

Its subcellular location is the cytoplasm. It carries out the reaction glycyl-tRNA(Ala) + H2O = tRNA(Ala) + glycine + H(+). The enzyme catalyses a D-aminoacyl-tRNA + H2O = a tRNA + a D-alpha-amino acid + H(+). Functionally, an aminoacyl-tRNA editing enzyme that deacylates mischarged D-aminoacyl-tRNAs. Also deacylates mischarged glycyl-tRNA(Ala), protecting cells against glycine mischarging by AlaRS. Acts via tRNA-based rather than protein-based catalysis; rejects L-amino acids rather than detecting D-amino acids in the active site. By recycling D-aminoacyl-tRNA to D-amino acids and free tRNA molecules, this enzyme counteracts the toxicity associated with the formation of D-aminoacyl-tRNA entities in vivo and helps enforce protein L-homochirality. In Shouchella clausii (strain KSM-K16) (Alkalihalobacillus clausii), this protein is D-aminoacyl-tRNA deacylase.